We begin with the raw amino-acid sequence, 469 residues long: Calcium-binding mitochondrial carrier protein SCaMC-2-A (469 aa).

The Mitochondrial intermembrane portion of the chain corresponds to 1-189; it reads MLCLCLYVPV…EHLTGMWWRH (189 aa). 3 consecutive EF-hand domains span residues 47–80, 78–113, and 114–149; these read TYRRWRKKSLKTEEKEHDGQLDFEEFVHYLQDHE, DHEKDLKLVFKSMDRKIAGQVNANDIVNSLRDLGVH, and ISLKQAEKVLKSMDKNGTMTIDWNEWKKYPTLQPAE. 3 residues coordinate Ca(2+): D64, Q66, and E71. Solcar repeat units lie at residues 184–270, 278–363, and 375–463; these read GMWW…IKRV, LGIS…LKNT, and PGVF…IKST. A helical membrane pass occupies residues 190 to 207; the sequence is LVSGGGAGAVSRTCTAPL. Residues 208–244 are Mitochondrial matrix-facing; the sequence is DRLKVLMQVHGCQGKSMCLMSGLTQMIKEGGVRSLWR. A helical transmembrane segment spans residues 245–264; that stretch reads GNGINVIKIAPETALKFMAY. Topologically, residues 265-287 are mitochondrial intermembrane; that stretch reads EQIKRVMGSSQETLGISERFVAG. A helical transmembrane segment spans residues 288–301; it reads SLAGVIAQSTIYPM. Topologically, residues 302–337 are mitochondrial matrix; sequence EVLKTRLALRKTGQYKGISDCAKHILKTEGMSAFYK. A helical membrane pass occupies residues 338–357; it reads GYVPNMLGIIPYAGIDLAVY. Residues 358-380 are Mitochondrial intermembrane-facing; the sequence is ETLKNTWLQRYGTENADPGVFVL. Residues 381-398 traverse the membrane as a helical segment; sequence LACGTVSSTCGQLASYPL. Residues 399–437 lie on the Mitochondrial matrix side of the membrane; that stretch reads ALIRTRMQAQASVEGSSQVSMTGLFKQIMKTEGPTGLYR. Residues 438-457 traverse the membrane as a helical segment; sequence GLTPNFLKVIPAVSISYVVY. The Mitochondrial intermembrane portion of the chain corresponds to 458-469; the sequence is EHIKSTLGVRSR.

It belongs to the mitochondrial carrier (TC 2.A.29) family.

It is found in the mitochondrion inner membrane. Calcium-dependent mitochondrial solute carrier. The polypeptide is Calcium-binding mitochondrial carrier protein SCaMC-2-A (slc25a25a) (Danio rerio (Zebrafish)).